The primary structure comprises 144 residues: uncharacterized protein (144 aa).

In terms of domain architecture, HIT spans 4 to 111 (VFCAIIAGEA…LPPRNGDKLS (108 aa)). The Histidine triad motif motif lies at 96-100 (HVHLH).

This is an uncharacterized protein from Mycobacterium tuberculosis (strain CDC 1551 / Oshkosh).